The chain runs to 368 residues: 2-aminoethylphosphonate--pyruvate transaminase (368 aa).

Lysine 192 carries the N6-(pyridoxal phosphate)lysine modification.

Belongs to the class-V pyridoxal-phosphate-dependent aminotransferase family. PhnW subfamily. Homodimer. The cofactor is pyridoxal 5'-phosphate.

The enzyme catalyses (2-aminoethyl)phosphonate + pyruvate = phosphonoacetaldehyde + L-alanine. Functionally, involved in phosphonate degradation. In Pseudomonas putida (strain ATCC 47054 / DSM 6125 / CFBP 8728 / NCIMB 11950 / KT2440), this protein is 2-aminoethylphosphonate--pyruvate transaminase.